A 388-amino-acid polypeptide reads, in one-letter code: Succinate--CoA ligase [ADP-forming] subunit beta (388 aa).

The region spanning 9–245 (KELLASYGLP…KSQENERELK (237 aa)) is the ATP-grasp domain. Residues Lys-46, 53–55 (GRG), Glu-100, Tyr-103, and Glu-108 contribute to the ATP site. Positions 200 and 214 each coordinate Mg(2+). Substrate contacts are provided by residues Asn-265 and 322–324 (GIV).

The protein belongs to the succinate/malate CoA ligase beta subunit family. Heterotetramer of two alpha and two beta subunits. Mg(2+) serves as cofactor.

The enzyme catalyses succinate + ATP + CoA = succinyl-CoA + ADP + phosphate. It catalyses the reaction GTP + succinate + CoA = succinyl-CoA + GDP + phosphate. The protein operates within carbohydrate metabolism; tricarboxylic acid cycle; succinate from succinyl-CoA (ligase route): step 1/1. Succinyl-CoA synthetase functions in the citric acid cycle (TCA), coupling the hydrolysis of succinyl-CoA to the synthesis of either ATP or GTP and thus represents the only step of substrate-level phosphorylation in the TCA. The beta subunit provides nucleotide specificity of the enzyme and binds the substrate succinate, while the binding sites for coenzyme A and phosphate are found in the alpha subunit. The chain is Succinate--CoA ligase [ADP-forming] subunit beta from Neisseria meningitidis serogroup B (strain ATCC BAA-335 / MC58).